The chain runs to 353 residues: Ubiquinol oxidase 1, mitochondrial (353 aa).

A mitochondrion-targeting transit peptide spans 1–69; sequence MMTRGATRMT…RHFPVMGSRS (69 aa). Residues 77 to 99 form a disordered region; sequence DKQHDKKAENGSAAATGGGDGGD. A helical transmembrane segment spans residues 178–198; sequence AMMLETVAAVPGMVGGMLLHC. Residues Glu182, Glu221, and His224 each contribute to the Fe cation site. A helical membrane pass occupies residues 240 to 260; that stretch reads ALVFAVQGVFFNAYFVTYLLS. Positions 272, 323, and 326 each coordinate Fe cation.

This sequence belongs to the alternative oxidase family. In terms of assembly, homodimer; disulfide-linked. It depends on Fe cation as a cofactor.

It is found in the mitochondrion inner membrane. It carries out the reaction 2 a ubiquinol + O2 = 2 a ubiquinone + 2 H2O. With respect to regulation, stimulated by reduction of the disulfide bond and the presence of pyruvate. Functionally, catalyzes the cyanide-resistant oxidation of ubiquinol and the reduction of molecular oxygen to water, but does not translocate protons and consequently is not linked to oxidative phosphorylation. May increase respiration when the cytochrome respiratory pathway is restricted, or in response to low temperatures. This is Ubiquinol oxidase 1, mitochondrial (AOX1) from Nicotiana tabacum (Common tobacco).